The following is a 565-amino-acid chain: Membrane protein insertase YidC (565 aa).

A run of 6 helical transmembrane segments spans residues 6–26 (VLLI…WSKN), 348–368 (LMAL…SLLH), 370–390 (WGWA…PLSA), 437–457 (GGCF…WVLV), 479–499 (PYFI…KLTP), and 516–536 (PLIF…YWVI).

Belongs to the OXA1/ALB3/YidC family. Type 1 subfamily. As to quaternary structure, interacts with the Sec translocase complex via SecD. Specifically interacts with transmembrane segments of nascent integral membrane proteins during membrane integration.

The protein resides in the cell inner membrane. In terms of biological role, required for the insertion and/or proper folding and/or complex formation of integral membrane proteins into the membrane. Involved in integration of membrane proteins that insert both dependently and independently of the Sec translocase complex, as well as at least some lipoproteins. Aids folding of multispanning membrane proteins. In Xylella fastidiosa (strain M23), this protein is Membrane protein insertase YidC.